Reading from the N-terminus, the 179-residue chain is Adenine phosphoribosyltransferase (179 aa).

This sequence belongs to the purine/pyrimidine phosphoribosyltransferase family. Homodimer.

It is found in the cytoplasm. The catalysed reaction is AMP + diphosphate = 5-phospho-alpha-D-ribose 1-diphosphate + adenine. The protein operates within purine metabolism; AMP biosynthesis via salvage pathway; AMP from adenine: step 1/1. In terms of biological role, catalyzes a salvage reaction resulting in the formation of AMP, that is energically less costly than de novo synthesis. The chain is Adenine phosphoribosyltransferase from Helicobacter pylori (strain HPAG1).